A 648-amino-acid chain; its full sequence is Sodium/nucleoside cotransporter 1 (648 aa).

The Cytoplasmic segment spans residues 1-80 (MADNTQRQRE…ARSFCREHRQ (80 aa)). The chain crosses the membrane as a helical span at residues 81-104 (LFGWICKGLLSTACLGFLMVACLL). The Extracellular segment spans residues 105 to 109 (DLQRA). Residues 110–128 (LALLIITCVVLVFLAYDLL) form a helical membrane-spanning segment. The Cytoplasmic segment spans residues 129 to 147 (KRLLGSKLRRCVKFQGHSC). The chain crosses the membrane as a helical span at residues 148–167 (LSLWLKRGLALAAGVGLILW). Residues 168–178 (LSLDTAQRPEQ) lie on the Extracellular side of the membrane. Residues 179 to 195 (LVSFAGICVFLVLLFAG) traverse the membrane as a helical segment. Over 196-201 (SKHHRA) the chain is Cytoplasmic. Residues 202-222 (VSWRAVSWGLGLQFVLGLFVI) form a helical membrane-spanning segment. The Extracellular portion of the chain corresponds to 223-261 (RTEPGFIAFQWLGDQIQVFLSYTEAGSSFVFGEALVKDV). Residues 262-283 (FAFQVLPIIIFFSCVMSVLYYL) traverse the membrane as a helical segment. Residues 284–294 (GLMQWVILKIA) lie on the Cytoplasmic side of the membrane. Residues 295 to 318 (WLMQVTMGTSATETLSVAGNIFVS) traverse the membrane as a helical segment. Residues 319-337 (QTEAPLLIRPYLADMTLSE) lie on the Extracellular side of the membrane. The helical transmembrane segment at 338-360 (VHVVMTGGYATIAGSLLGAYISF) threads the bilayer. The Cytoplasmic segment spans residues 361–366 (GIDAAS). The helical transmembrane segment at 367-386 (LIAASVMAAPCALALSKLVY) threads the bilayer. Residues 387–423 (PEVEESKFRSENGVKLTYGDAQNLLEAASAGAAISVK) lie on the Extracellular side of the membrane. The helical transmembrane segment at 424 to 446 (VVANIAANLIAFLAVLAFVNAAL) threads the bilayer. Topologically, residues 447–457 (SWLGDMVDIQG) are cytoplasmic. The chain crosses the membrane as a helical span at residues 458 to 479 (LSFQLICSYVLRPVAFLMGVAW). The Extracellular portion of the chain corresponds to 480-534 (EDCPVVAELLGIKFFLNEFVAYQELSQYKQRRLAGAEEWLGDKKQWISVRAEILT). Residues 535-558 (TYALCGFANFSSIGIMLGGLTSLV) traverse the membrane as a helical segment. Over 559–569 (PQRRSDFSQIV) the chain is Cytoplasmic. Residues 570–592 (LRALITGAFVSLLNACVAGILYV) form a helical membrane-spanning segment. The Extracellular portion of the chain corresponds to 593–648 (PRGVEVDCVSLLNQTVSSSSFEVYLCCRQVFQSTSSEFSQVALDNCCRFYNHTVCT). N-linked (GlcNAc...) asparagine glycans are attached at residues asparagine 605 and asparagine 643.

This sequence belongs to the concentrative nucleoside transporter (CNT) (TC 2.A.41) family. N-glycosylated. N-glycosylation is required for localization to the plasma membrane and the transporter activity. Expressed predominantly in the brush-border membranes of the polarized epithelial cells of jejunum and renal cortical tubules and in the bile canalicular membranes of liver parenchymal cells.

Its subcellular location is the cell membrane. It is found in the apical cell membrane. It catalyses the reaction uridine(out) + Na(+)(out) = uridine(in) + Na(+)(in). The catalysed reaction is thymidine(out) + Na(+)(out) = thymidine(in) + Na(+)(in). The enzyme catalyses cytidine(out) + Na(+)(out) = cytidine(in) + Na(+)(in). It carries out the reaction adenosine(out) + Na(+)(out) = adenosine(in) + Na(+)(in). Its activity is regulated as follows. Due to its high apparent affinity but slow transport, adenosine could act as a negative regulator of pyrimidine transport under some conditions. Its function is as follows. Sodium and pyrimidine nucleoside symporter of the plasma membrane that imports uridine, thymidine and cytidine into cells by coupling their transport to the transmembrane sodium electrochemical gradient. Also transports adenosine, an atypical substrate transported with high apparent affinity, but low maximum velocity. Therefore, exhibits the transport characteristics of the nucleoside transport system cit or N2 subtype (N2/cit). Involved in renal nucleoside (re)absorption. The protein is Sodium/nucleoside cotransporter 1 of Rattus norvegicus (Rat).